A 610-amino-acid chain; its full sequence is UvrABC system protein C (610 aa).

In terms of domain architecture, GIY-YIG spans 16-94; it reads SQPGVYRMYD…IKLYQPRYNV (79 aa). Positions 204-239 constitute a UVR domain; it reads DQVLTQLIARMEKASQDLAFEEAARIRDQIQAVRRV.

It belongs to the UvrC family. Interacts with UvrB in an incision complex.

The protein localises to the cytoplasm. Its function is as follows. The UvrABC repair system catalyzes the recognition and processing of DNA lesions. UvrC both incises the 5' and 3' sides of the lesion. The N-terminal half is responsible for the 3' incision and the C-terminal half is responsible for the 5' incision. In Salmonella enteritidis PT4 (strain P125109), this protein is UvrABC system protein C.